We begin with the raw amino-acid sequence, 368 residues long: Probable endopolygalacturonase I (368 aa).

The first 18 residues, 1–18 (MHSYQLLGLAAVGSLVSA), serve as a signal peptide directing secretion. Positions 19-31 (APAPSRVSEFAKK) are excised as a propeptide. The cysteines at positions 35 and 50 are disulfide-linked. PbH1 repeat units follow at residues 140–161 (VEDS…ISVQ), 162–192 (ATNV…DISE), and 193–214 (STGV…AINS). Residue Asp-207 is the Proton donor of the active site. The cysteines at positions 209 and 225 are disulfide-linked. Residue His-229 is part of the active site. 3 PbH1 repeats span residues 244 to 265 (VKNV…RIKT), 273 to 295 (VSEI…VIEQ), and 307 to 352 (STGI…DLSG). N-linked (GlcNAc...) asparagine glycosylation occurs at Asn-246. 2 disulfides stabilise this stretch: Cys-335/Cys-340 and Cys-359/Cys-368.

This sequence belongs to the glycosyl hydrolase 28 family.

The protein localises to the secreted. The catalysed reaction is (1,4-alpha-D-galacturonosyl)n+m + H2O = (1,4-alpha-D-galacturonosyl)n + (1,4-alpha-D-galacturonosyl)m.. In terms of biological role, involved in maceration and soft-rotting of plant tissue. Hydrolyzes the 1,4-alpha glycosidic bonds of de-esterified pectate in the smooth region of the plant cell wall. In Aspergillus niger (strain ATCC MYA-4892 / CBS 513.88 / FGSC A1513), this protein is Probable endopolygalacturonase I (pgaI).